The primary structure comprises 1782 residues: Atrochrysone carboxylic acid synthase (1782 aa).

Residues 41 to 270 are N-terminal acylcarrier protein transacylase domain (SAT); the sequence is HTYTKDRRYP…ALPVYGGLCH (230 aa). The 435-residue stretch at 407–841 folds into the Ketosynthase family 3 (KS3) domain; the sequence is QSKIAIVGMS…GGNSTLAIEE (435 aa). Catalysis depends on for beta-ketoacyl synthase activity residues cysteine 580, histidine 716, and histidine 759. Positions 946 to 1266 are malonyl-CoA:ACP transacylase (MAT) domain; that stretch reads FAFTGQGSSY…LGILHCAGVP (321 aa). The tract at residues 1331–1648 is product template (PT) domain; the sequence is TSTVQQIIHE…RILLNRFFSA (318 aa). The N-terminal hotdog fold stretch occupies residues 1335–1468; it reads QQIIHEQYDG…ATVYYEEASD (134 aa). The PKS/mFAS DH domain maps to 1335–1643; sequence QQIIHEQYDG…FRRYPRILLN (309 aa). The active-site Proton acceptor; for dehydratase activity is the histidine 1367. The segment at 1495-1643 is C-terminal hotdog fold; it reads VANRFTRRMA…FRRYPRILLN (149 aa). The active-site Proton donor; for dehydratase activity is the aspartate 1554. Residues 1653–1703 are disordered; sequence ARKSTPATSAPAPAPPAGSEALQPKAAPASTPAAPASADAPTTNGVKAAAE. Over residues 1678–1695 the composition is skewed to low complexity; the sequence is AAPASTPAAPASADAPTT. The Carrier domain occupies 1704–1781; it reads PDANSTAAKA…DLKSWLLEYY (78 aa). Position 1741 is an O-(pantetheine 4'-phosphoryl)serine (serine 1741).

Specifically expressed in conidia.

The enzyme catalyses holo-[ACP] + 8 malonyl-CoA + 8 H(+) = atrochrysone carboxyl-[ACP] + 8 CO2 + 8 CoA + 2 H2O. The protein operates within secondary metabolite biosynthesis. Functionally, non-reducing polyketide synthase; part of the gene cluster that mediates the biosynthesis of trypacidin, a mycotoxin with antiprotozoal activity and that plays a role in the infection process. The pathway begins with the synthesis of atrochrysone thioester by the polyketide synthase (PKS) tpcC. The atrochrysone carboxyl ACP thioesterase tpcB then breaks the thioester bond and releases the atrochrysone carboxylic acid from tpcC. The decarboxylase tpcK converts atrochrysone carboxylic acid to atrochrysone which is further reduced into emodin anthrone. The next step is performed by the emodin anthrone oxygenase tpcL that catalyzes the oxidation of emodin anthrone to emodin. Emodin O-methyltransferase encoded by tpcA catalyzes methylation of the 8-hydroxy group of emodin to form questin. Ring cleavage of questin by questin oxidase tpcI leads to desmethylsulochrin via several intermediates including questin epoxide. Another methylation step catalyzed by tpcM leads to the formation of sulochrin which is further converted to monomethylsulfochrin by tpcH. Finally, the tpcJ catalyzes the conversion of monomethylsulfochrin to trypacidin. Trypacidin is toxic for human pulmonary and bronchial epithelial cells by initiating the intracellular formation of nitric oxide (NO) and hydrogen peroxide (H(2)O(2)), thus triggering host necrotic cell death. The trypacidin pathway is also able to produce endocrocin via a distinct route from the endocrocin Enc pathway. The sequence is that of Atrochrysone carboxylic acid synthase from Aspergillus fumigatus (strain ATCC MYA-4609 / CBS 101355 / FGSC A1100 / Af293) (Neosartorya fumigata).